Reading from the N-terminus, the 387-residue chain is Phosphoglycerate kinase (387 aa).

Substrate is bound by residues Asp21–Asn23, Arg36, His59–Arg62, Arg113, and Arg146. ATP contacts are provided by residues Lys197, Glu314, and Gly340–Thr343.

Belongs to the phosphoglycerate kinase family. As to quaternary structure, monomer.

Its subcellular location is the cytoplasm. The enzyme catalyses (2R)-3-phosphoglycerate + ATP = (2R)-3-phospho-glyceroyl phosphate + ADP. Its pathway is carbohydrate degradation; glycolysis; pyruvate from D-glyceraldehyde 3-phosphate: step 2/5. In Marinomonas sp. (strain MWYL1), this protein is Phosphoglycerate kinase.